Reading from the N-terminus, the 186-residue chain is Ribosome-recycling factor (186 aa).

Belongs to the RRF family.

The protein localises to the cytoplasm. Its function is as follows. Responsible for the release of ribosomes from messenger RNA at the termination of protein biosynthesis. May increase the efficiency of translation by recycling ribosomes from one round of translation to another. This is Ribosome-recycling factor from Prosthecochloris aestuarii (strain DSM 271 / SK 413).